Here is a 104-residue protein sequence, read N- to C-terminus: Large ribosomal subunit protein bL21 (104 aa).

This sequence belongs to the bacterial ribosomal protein bL21 family. In terms of assembly, part of the 50S ribosomal subunit. Contacts protein L20.

Its function is as follows. This protein binds to 23S rRNA in the presence of protein L20. The polypeptide is Large ribosomal subunit protein bL21 (Streptococcus pyogenes serotype M1).